A 323-amino-acid chain; its full sequence is Aspartate carbamoyltransferase catalytic subunit (323 aa).

Residues Arg-71 and Thr-72 each contribute to the carbamoyl phosphate site. Residue Lys-99 participates in L-aspartate binding. Carbamoyl phosphate is bound by residues Arg-121, His-151, and Gln-154. Positions 184 and 239 each coordinate L-aspartate. Carbamoyl phosphate-binding residues include Gly-280 and Pro-281.

Belongs to the aspartate/ornithine carbamoyltransferase superfamily. ATCase family. In terms of assembly, heterododecamer (2C3:3R2) of six catalytic PyrB chains organized as two trimers (C3), and six regulatory PyrI chains organized as three dimers (R2).

The catalysed reaction is carbamoyl phosphate + L-aspartate = N-carbamoyl-L-aspartate + phosphate + H(+). Its pathway is pyrimidine metabolism; UMP biosynthesis via de novo pathway; (S)-dihydroorotate from bicarbonate: step 2/3. Functionally, catalyzes the condensation of carbamoyl phosphate and aspartate to form carbamoyl aspartate and inorganic phosphate, the committed step in the de novo pyrimidine nucleotide biosynthesis pathway. The protein is Aspartate carbamoyltransferase catalytic subunit of Ralstonia pickettii (strain 12J).